Consider the following 576-residue polypeptide: Quinone-reactive Ni/Fe-hydrogenase large chain (576 aa).

Residues Cys62, Cys65, Cys547, and Cys550 each coordinate Ni(2+).

This sequence belongs to the [NiFe]/[NiFeSe] hydrogenase large subunit family. As to quaternary structure, heterodimer of a large and a small subunit. The cofactor is Ni(2+).

Its subcellular location is the cell membrane. The enzyme catalyses H2 + a menaquinone = a menaquinol. In terms of biological role, this enzyme recycles the H(2) produced by nitrogenase to increase the production of ATP and to protect nitrogenase against inhibition or damage by O(2) under carbon- or phosphate-limited conditions. This Wolinella succinogenes (strain ATCC 29543 / DSM 1740 / CCUG 13145 / JCM 31913 / LMG 7466 / NCTC 11488 / FDC 602W) (Vibrio succinogenes) protein is Quinone-reactive Ni/Fe-hydrogenase large chain (hydB).